The following is a 55-amino-acid chain: MNLAIQILASYPPSGKEKGYEAQPSGGVSAHYLHYDSDIHTPDPTNALRTAVPGR.

In terms of biological role, overlapping regulatory peptide whose translation enables hokB expression. This chain is Regulatory protein MokB (mokB), found in Escherichia coli (strain K12).